Here is a 766-residue protein sequence, read N- to C-terminus: Pentatricopeptide repeat-containing protein At5g28460 (766 aa).

16 PPR repeats span residues 151 to 181 (TIVA…LDSN), 184 to 218 (NSQV…ESVF), 221 to 257 (NRIT…GVSP), 258 to 292 (NSVW…KTPL), 293 to 327 (EAPP…KIRP), 328 to 358 (DVVT…MRGK), 369 to 404 (DSIH…RCVP), 405 to 439 (NAVT…EIKP), 440 to 474 (NVVT…GVKG), 475 to 509 (NVVT…GCSP), 510 to 544 (DAKI…GFSL), 545 to 579 (DLLA…GKKP), 580 to 614 (DSIT…GLDP), 615 to 650 (TVTT…KVNP), 651 to 685 (NTVI…MVRP), and 686 to 720 (NVET…SCEP).

The protein belongs to the PPR family. P subfamily.

The chain is Pentatricopeptide repeat-containing protein At5g28460 from Arabidopsis thaliana (Mouse-ear cress).